The primary structure comprises 488 residues: UDP-N-acetylmuramate--L-alanine ligase (488 aa).

Residue 122–128 (GTHGKTT) coordinates ATP.

This sequence belongs to the MurCDEF family.

It is found in the cytoplasm. The catalysed reaction is UDP-N-acetyl-alpha-D-muramate + L-alanine + ATP = UDP-N-acetyl-alpha-D-muramoyl-L-alanine + ADP + phosphate + H(+). The protein operates within cell wall biogenesis; peptidoglycan biosynthesis. Functionally, cell wall formation. The polypeptide is UDP-N-acetylmuramate--L-alanine ligase (Mycobacterium marinum (strain ATCC BAA-535 / M)).